A 173-amino-acid chain; its full sequence is Probable glutathione peroxidase 5 (173 aa).

Glycine 2 is lipidated: N-myristoyl glycine. Cysteine 46 is a catalytic residue.

The protein belongs to the glutathione peroxidase family. As to expression, ubiquitous.

It is found in the cell membrane. The catalysed reaction is 2 glutathione + H2O2 = glutathione disulfide + 2 H2O. In terms of biological role, may constitute a glutathione peroxidase-like protective system against oxidative stresses. The sequence is that of Probable glutathione peroxidase 5 (GPX5) from Arabidopsis thaliana (Mouse-ear cress).